Reading from the N-terminus, the 256-residue chain is ATP synthase subunit a (256 aa).

Residues 1–8 (MYQFNFIL) constitute a propeptide, removed in mature form. Transmembrane regions (helical) follow at residues 34 to 54 (ITNI…YHLL), 92 to 112 (YFPF…IGMV), 121 to 141 (HFIL…FLGL), 148 to 168 (FFSL…LVLI), 186 to 206 (ANIL…YNIM), 209 to 229 (GILF…FSGL), and 230 to 250 (ELAI…SYIK).

The protein belongs to the ATPase A chain family. In terms of assembly, F-type ATPases have 2 components, CF(1) - the catalytic core - and CF(0) - the membrane proton channel. CF(1) has five subunits: alpha(3), beta(3), gamma(1), delta(1), epsilon(1). CF(0) has three main subunits: a, b and c.

It is found in the mitochondrion inner membrane. Functionally, mitochondrial membrane ATP synthase (F(1)F(0) ATP synthase or Complex V) produces ATP from ADP in the presence of a proton gradient across the membrane which is generated by electron transport complexes of the respiratory chain. F-type ATPases consist of two structural domains, F(1) - containing the extramembraneous catalytic core and F(0) - containing the membrane proton channel, linked together by a central stalk and a peripheral stalk. During catalysis, ATP synthesis in the catalytic domain of F(1) is coupled via a rotary mechanism of the central stalk subunits to proton translocation. Key component of the proton channel; it may play a direct role in the translocation of protons across the membrane. This chain is ATP synthase subunit a (atp6), found in Emericella nidulans (Aspergillus nidulans).